The following is a 579-amino-acid chain: Mitogen-activated protein kinase kinase kinase 7 (579 aa).

The interaction with MAPK8IP1 stretch occupies residues 1-300 (MSTASAASSS…FPGADEPLQY (300 aa)). Positions 36 to 291 (IEVEEVVGRG…KIMTHLMRYF (256 aa)) constitute a Protein kinase domain. ATP is bound by residues 42–50 (VGRGAFGVV) and lysine 63. Residue lysine 72 forms a Glycyl lysine isopeptide (Lys-Gly) (interchain with G-Cter in ubiquitin) linkage. Aspartate 156 functions as the Proton acceptor in the catalytic mechanism. Lysine 158 is covalently cross-linked (Glycyl lysine isopeptide (Lys-Gly) (interchain with G-Cter in ubiquitin)). Residues threonine 184 and threonine 187 each carry the phosphothreonine; by autocatalysis modification. Serine 192 carries the phosphoserine; by autocatalysis modification. Lysine 209 is covalently cross-linked (Glycyl lysine isopeptide (Lys-Gly) (interchain with G-Cter in ubiquitin)). Disordered regions lie at residues 301-338 (PCQY…MEQV) and 354-391 (KNQA…MSAD). The span at 306-338 (DEGQSNSATSTGSFMDIASTNTSNKSDTNMEQV) shows a compositional bias: polar residues. Low complexity predominate over residues 361-375 (SESGRLSLGASRGSS). Residues serine 367, serine 389, and serine 412 each carry the phosphoserine modification. Over residues 416–425 (LTVTGTEPGQ) the composition is skewed to polar residues. The segment at 416–466 (LTVTGTEPGQVSSRSSSPSVRMITTSGPTSEKPARSHPWTPDDSTDTNGSD) is disordered. The span at 426 to 436 (VSSRSSSPSVR) shows a compositional bias: low complexity. Serine 428 bears the Phosphoserine mark.

Belongs to the protein kinase superfamily. STE Ser/Thr protein kinase family. MAP kinase kinase kinase subfamily. As to quaternary structure, can form homodimer. Binds both upstream activators and downstream substrates in multimolecular complexes. Interacts with TAB1/MAP3K7IP1, TAB2/MAP3K7IP2 and TAB3/MAP3K7IP3. Identified in the TRIKA2 complex composed of MAP3K7/TAK1, TAB1/MAP3K7IP1 and TAB2/MAP3K7IP2. Interacts with PPM1L and PPM1B/PP2CB. Interaction with PP2A and PPP6C leads to its repressed activity. Interacts with TRAF6 and TAB1/MAP3K7IP1; during IL-1 signaling. Interacts with TAOK1 and TAOK2; interaction with TAOK2 interferes with MAP3K7 interaction with IKKA, thus preventing NF-kappa-B activation. Interacts with DYNC2I2 (via WD domains). Interacts with CYLD and RBCK1. Interacts with TGFBR1; induces MAP3K7/TAK1 activation by TRAF6. Interacts with MAPK8IP1 and SMAD6. Interacts with isoform 1 of VRK2. Interacts with DAB2; the interaction is induced by TGF-beta stimulation and may mediate TGF-beta stimulated JNK activation. Interacts with TRIM5. Part of a complex containing ITCH, NDFIP1 and MAP3K7. Interacts with PLEKHM1 (via N- and C-terminus). Interacts with TRIM8. Found in a complex with SH3RF1, RAC2, MAP2K7/MKK7, MAPK8IP1/JIP1, MAPK8/JNK1 and MAPK9/JNK2. Interacts with SASH1. Interacts with RIPK1. The cofactor is Mg(2+). Post-translationally, association with TAB1/MAP3K7IP1 promotes autophosphorylation and subsequent activation. Association with TAB2/MAP3K7IP2, itself associated with free unanchored Lys-63 polyubiquitin chain, promotes autophosphorylation and subsequent activation of MAP3K7. Dephosphorylation at Thr-187 by PP2A and PPP6C leads to inactivation. In terms of processing, 'Lys-48'-linked polyubiquitination at Lys-72 is induced by TNFalpha, and leads to proteasomal degradation. Undergoes 'Lys-48'-linked polyubiquitination catalyzed by ITCH. 'Lys-63'-linked polyubiquitination at Lys-158 by TRIM8 does not lead to proteasomal degradation but contributes to autophosphorylation and activation. Deubiquitinated by CYLD, a protease that selectively cleaves 'Lys-63'-linked ubiquitin chains.Deubiquitinated by USP19; leading to negative regulation of TNF-alpha- and IL-1beta-triggered NF-kappa-B activation.

Its subcellular location is the cytoplasm. The protein localises to the cell membrane. The enzyme catalyses L-seryl-[protein] + ATP = O-phospho-L-seryl-[protein] + ADP + H(+). It carries out the reaction L-threonyl-[protein] + ATP = O-phospho-L-threonyl-[protein] + ADP + H(+). Activated by pro-inflammatory cytokines and in response to physical and chemical stresses, including osmotic stress, oxidative stress, arsenic and ultraviolet light irradiation. Activated by 'Lys-63'-linked polyubiquitination and by autophosphorylation. Association with TAB1/MAP3K7IP1 and TAB2/MAP3K7IP2 promotes activation through autophosphorylation, whereas PPM1B/PP2CB, PP2A and PPP6C dephosphorylation leads to inactivation. Ceramides are also able to activate MAP3K7/TAK1. Its function is as follows. Serine/threonine kinase which acts as an essential component of the MAP kinase signal transduction pathway. Plays an important role in the cascades of cellular responses evoked by changes in the environment. Mediates signal transduction of TRAF6, various cytokines including interleukin-1 (IL-1), transforming growth factor-beta (TGFB), TGFB-related factors like BMP2 and BMP4, toll-like receptors (TLR), tumor necrosis factor receptor CD40 and B-cell receptor (BCR). Once activated, acts as an upstream activator of the MKK/JNK signal transduction cascade and the p38 MAPK signal transduction cascade through the phosphorylation and activation of several MAP kinase kinases like MAP2K1/MEK1, MAP2K3/MKK3, MAP2K6/MKK6 and MAP2K7/MKK7. These MAP2Ks in turn activate p38 MAPKs and c-jun N-terminal kinases (JNKs); both p38 MAPK and JNK pathways control the transcription factors activator protein-1 (AP-1). Independently of MAP2Ks and p38 MAPKs, acts as a key activator of NF-kappa-B by promoting activation of the I-kappa-B-kinase (IKK) core complex. Mechanistically, recruited to polyubiquitin chains of RIPK2 and IKBKG/NEMO via TAB2/MAP3K7IP2 and TAB3/MAP3K7IP3, and catalyzes phosphorylation and activation of IKBKB/IKKB component of the IKK complex, leading to NF-kappa-B activation. In osmotic stress signaling, plays a major role in the activation of MAPK8/JNK1, but not that of NF-kappa-B. Promotes TRIM5 capsid-specific restriction activity. Phosphorylates RIPK1 at 'Ser-321' which positively regulates RIPK1 interaction with RIPK3 to promote necroptosis but negatively regulates RIPK1 kinase activity and its interaction with FADD to mediate apoptosis. Phosphorylates STING1 in response to cGAMP-activation, promoting association between STEEP1 and STING1 and STING1 translocation to COPII vesicles. This chain is Mitogen-activated protein kinase kinase kinase 7 (Map3k7), found in Mus musculus (Mouse).